The primary structure comprises 424 residues: Serine/threonine-protein kinase H1 (424 aa).

The N-myristoyl glycine moiety is linked to residue Gly-2. Residue Cys-3 is the site of S-palmitoyl cysteine attachment. Residues 59-79 (APPCPGVPNTGHTAPPSEPPR) are disordered. One can recognise a Protein kinase domain in the interval 98–355 (YDIKALIGRG…ALQALRHPWV (258 aa)). ATP is bound by residues 104 to 112 (IGRGSFSRV) and Lys-127. Catalysis depends on Asp-218, which acts as the Proton acceptor. The disordered stretch occupies residues 378-408 (RASSRCQSTKSSQSTRSSRSTRSNKSRRVRE). Ser-380 and Ser-381 each carry phosphoserine; by autocatalysis. Over residues 381–398 (SRCQSTKSSQSTRSSRST) the composition is skewed to low complexity.

Belongs to the protein kinase superfamily. CAMK Ser/Thr protein kinase family. Homodimer. Autophosphorylated on serine residues. In terms of processing, myristoylated. Required for membrane association. Prerequisite for palmitoylation to occur. Post-translationally, palmitoylated.

It is found in the golgi apparatus. The protein resides in the cytoplasm. Its subcellular location is the cytoskeleton. It localises to the microtubule organizing center. The protein localises to the centrosome. It is found in the nucleus speckle. The protein resides in the endoplasmic reticulum membrane. Its subcellular location is the cell membrane. The catalysed reaction is L-seryl-[protein] + ATP = O-phospho-L-seryl-[protein] + ADP + H(+). It catalyses the reaction L-threonyl-[protein] + ATP = O-phospho-L-threonyl-[protein] + ADP + H(+). Its activity is regulated as follows. Activity depends on Ca(2+) concentration. Its function is as follows. Serine/threonine protein kinase that may be involved in the regulation of pre-mRNA processing. It may phosphorylate components of nuclear splice factor compartments (SFC), such as non-snRNP splicing factors containing a serine/arginine-rich domain (SR proteins). Reversible phosphorylation of SR proteins may cause their release into the nucleoplasm and change their local concentration, thereby influencing alternative splicing. The protein is Serine/threonine-protein kinase H1 (Pskh1) of Mus musculus (Mouse).